Here is a 442-residue protein sequence, read N- to C-terminus: Tyrosine-protein kinase transforming protein RYK (442 aa).

The region spanning 45 to 316 (LSLGKVLGEG…QLKVHLEKLL (272 aa)) is the Protein kinase domain. Residues 51-59 (LGEGEFGSV) and Lys-77 each bind ATP. Asp-181 functions as the Proton acceptor in the catalytic mechanism. Tyr-212 carries the post-translational modification Phosphotyrosine; by autocatalysis.

It belongs to the protein kinase superfamily. Tyr protein kinase family. AXL/UFO subfamily.

The protein localises to the host cell membrane. It carries out the reaction L-tyrosyl-[protein] + ATP = O-phospho-L-tyrosyl-[protein] + ADP + H(+). This is Tyrosine-protein kinase transforming protein RYK (V-RYK) from Avian retrovirus RPL30.